A 60-amino-acid chain; its full sequence is Small ribosomal subunit protein bS21 (60 aa).

The tract at residues 36–60 (QFFETPQEKHKRKEATRRRQRSRRR) is disordered. Basic residues predominate over residues 44–60 (KHKRKEATRRRQRSRRR).

The protein belongs to the bacterial ribosomal protein bS21 family.

This Synechocystis sp. (strain ATCC 27184 / PCC 6803 / Kazusa) protein is Small ribosomal subunit protein bS21 (rpsU).